Here is a 504-residue protein sequence, read N- to C-terminus: Maturase K (504 aa).

This sequence belongs to the intron maturase 2 family. MatK subfamily.

The protein resides in the plastid. Its subcellular location is the chloroplast. Its function is as follows. Usually encoded in the trnK tRNA gene intron. Probably assists in splicing its own and other chloroplast group II introns. This chain is Maturase K, found in Actinidia chinensis (Kiwi).